Reading from the N-terminus, the 855-residue chain is DNA mismatch repair protein MutS (855 aa).

616-623 serves as a coordination point for ATP; the sequence is GPNMGGKS.

Belongs to the DNA mismatch repair MutS family.

This protein is involved in the repair of mismatches in DNA. It is possible that it carries out the mismatch recognition step. This protein has a weak ATPase activity. This is DNA mismatch repair protein MutS from Salmonella paratyphi C (strain RKS4594).